The chain runs to 164 residues: Phosphopantetheine adenylyltransferase (164 aa).

Serine 9 contacts substrate. Residues 9–10 (SF) and histidine 17 contribute to the ATP site. Substrate is bound by residues lysine 41, leucine 73, and lysine 87. ATP contacts are provided by residues 88-90 (GLR), glutamate 98, and 122-128 (YSYLSSS).

This sequence belongs to the bacterial CoaD family. As to quaternary structure, homohexamer. Mg(2+) is required as a cofactor.

The protein localises to the cytoplasm. The catalysed reaction is (R)-4'-phosphopantetheine + ATP + H(+) = 3'-dephospho-CoA + diphosphate. It functions in the pathway cofactor biosynthesis; coenzyme A biosynthesis; CoA from (R)-pantothenate: step 4/5. Functionally, reversibly transfers an adenylyl group from ATP to 4'-phosphopantetheine, yielding dephospho-CoA (dPCoA) and pyrophosphate. In Rhodococcus jostii (strain RHA1), this protein is Phosphopantetheine adenylyltransferase.